A 492-amino-acid polypeptide reads, in one-letter code: Probable cytochrome P450 310a1 (492 aa).

Cys428 provides a ligand contact to heme.

Belongs to the cytochrome P450 family. Heme serves as cofactor.

The protein resides in the endoplasmic reticulum membrane. The protein localises to the microsome membrane. In terms of biological role, may be involved in the metabolism of insect hormones and in the breakdown of synthetic insecticides. The polypeptide is Probable cytochrome P450 310a1 (Cyp310a1) (Drosophila melanogaster (Fruit fly)).